Reading from the N-terminus, the 215-residue chain is Adenylate kinase (215 aa).

ATP is bound at residue 10-15; that stretch reads GAGKGT. The NMP stretch occupies residues 30–59; that stretch reads STGDILRANVREGTELGLAAKAYMDKGELV. AMP-binding positions include T31, R36, 57–59, 85–88, and Q92; these read ELV and GYPR. The LID stretch occupies residues 126-162; sequence GRLMCKCGASYHIISNPPKKDNVCDICGGEVFQRADD. Position 127 (R127) interacts with ATP. Residues C130 and C132 each coordinate Zn(2+). Residue 135–136 participates in ATP binding; it reads SY. Zn(2+) is bound by residues C149 and C152. Residues R159 and R170 each contribute to the AMP site. Residue K198 participates in ATP binding.

Belongs to the adenylate kinase family. Monomer.

The protein localises to the cytoplasm. It carries out the reaction AMP + ATP = 2 ADP. Its pathway is purine metabolism; AMP biosynthesis via salvage pathway; AMP from ADP: step 1/1. In terms of biological role, catalyzes the reversible transfer of the terminal phosphate group between ATP and AMP. Plays an important role in cellular energy homeostasis and in adenine nucleotide metabolism. In Methanosarcina acetivorans (strain ATCC 35395 / DSM 2834 / JCM 12185 / C2A), this protein is Adenylate kinase.